Here is a 487-residue protein sequence, read N- to C-terminus: Betaine aldehyde dehydrogenase (487 aa).

K(+) is bound by residues Ile27 and Asp93. 149-151 (GAW) is a binding site for NAD(+). The active-site Charge relay system is the Lys161. Residues 175–178 (KPSE) and 228–231 (SVPT) contribute to the NAD(+) site. K(+) is bound at residue Leu243. The Proton acceptor role is filled by Glu249. NAD(+) is bound by residues Gly251, Cys283, and Glu384. The Nucleophile role is filled by Cys283. At Cys283 the chain carries Cysteine sulfenic acid (-SOH). 2 residues coordinate K(+): Lys454 and Gly457. Glu461 functions as the Charge relay system in the catalytic mechanism.

The protein belongs to the aldehyde dehydrogenase family. In terms of assembly, dimer of dimers. The cofactor is K(+).

It carries out the reaction betaine aldehyde + NAD(+) + H2O = glycine betaine + NADH + 2 H(+). The protein operates within amine and polyamine biosynthesis; betaine biosynthesis via choline pathway; betaine from betaine aldehyde: step 1/1. Functionally, involved in the biosynthesis of the osmoprotectant glycine betaine. Catalyzes the irreversible oxidation of betaine aldehyde to the corresponding acid. In Brucella anthropi (strain ATCC 49188 / DSM 6882 / CCUG 24695 / JCM 21032 / LMG 3331 / NBRC 15819 / NCTC 12168 / Alc 37) (Ochrobactrum anthropi), this protein is Betaine aldehyde dehydrogenase.